Consider the following 364-residue polypeptide: Fructose-bisphosphate aldolase C (364 aa).

A Phosphotyrosine modification is found at Tyr5. 3 positions are modified to phosphoserine: Ser36, Ser39, and Ser45. Position 56 (Arg56) interacts with substrate. Lys111 is subject to N6-acetyllysine. The residue at position 132 (Ser132) is a Phosphoserine. Lys147 is a substrate binding site. The active-site Proton acceptor is the Glu188. Lys230 serves as the catalytic Schiff-base intermediate with dihydroxyacetone-P.

This sequence belongs to the class I fructose-bisphosphate aldolase family. As to quaternary structure, homotetramer. Interacts with ATP6V1E1.

The catalysed reaction is beta-D-fructose 1,6-bisphosphate = D-glyceraldehyde 3-phosphate + dihydroxyacetone phosphate. It participates in carbohydrate degradation; glycolysis; D-glyceraldehyde 3-phosphate and glycerone phosphate from D-glucose: step 4/4. This is Fructose-bisphosphate aldolase C (ALDOC) from Macaca fascicularis (Crab-eating macaque).